We begin with the raw amino-acid sequence, 164 residues long: UPF0114 protein Sbal223_3668 (164 aa).

A run of 4 helical transmembrane segments spans residues isoleucine 15–phenylalanine 35, leucine 53–valine 73, lysine 108–valine 128, and isoleucine 136–leucine 156.

The protein belongs to the UPF0114 family.

Its subcellular location is the cell membrane. The chain is UPF0114 protein Sbal223_3668 from Shewanella baltica (strain OS223).